Reading from the N-terminus, the 390-residue chain is Homeobox protein Hox-B2a (390 aa).

Disordered regions lie at residues 40–73 (STAIPPPFEHTIPSLSPCTGNQARPRSQKRTASN), 81–100 (TAPPTQHQQGPAPLSGGAPL), 108–155 (KEKK…LDNV), and 211–338 (MKHK…SLPD). The span at 52–73 (PSLSPCTGNQARPRSQKRTASN) shows a compositional bias: polar residues. The Antp-type hexapeptide signature appears at 103 to 108 (EFPWMK). The span at 118 to 135 (KPGATAAAAAASPSQASS) shows a compositional bias: low complexity. The homeobox DNA-binding region spans 158–217 (SRRLRTAYTNTQLLELEKEFHFNKYLCRPRRVEIAALLDLTERQVKVWFQNRRMKHKRQT). The span at 244–262 (SSQSLEVSGSGSAAPSESE) shows a compositional bias: low complexity. Residues 263–290 (TCPTTAAYTNSSDKSQPTPEEGQASQPE) show a composition bias toward polar residues.

It belongs to the Antp homeobox family. Proboscipedia subfamily.

The protein localises to the nucleus. Sequence-specific transcription factor which is part of a developmental regulatory system that provides cells with specific positional identities on the anterior-posterior axis. Plays an important role in the patterning of hindbrain and pharyngeal arches. This Danio rerio (Zebrafish) protein is Homeobox protein Hox-B2a (hoxb2a).